The following is a 508-amino-acid chain: Glutamate--cysteine ligase, chloroplastic (508 aa).

The N-terminal 59 residues, 1 to 59 (MTTIFRLASSSSPSLRHDATPHNFHIRKTSISNTFSFSSKNSLSFKRILTSGGSRRFIV), are a transit peptide targeting the chloroplast. 2 disulfides stabilise this stretch: C172–C392 and C335–C350.

Belongs to the carboxylate-amine ligase family. Glutamate--cysteine ligase type 2 subfamily. Homodimer or monomer when oxidized or reduced, respectively. In terms of processing, the Cys-172-Cys-392 disulfide bridge is known to modulate the enzyme activity according to the redox status. The oxidized form constitutes the active enzyme.

The protein resides in the plastid. It localises to the chloroplast. It carries out the reaction L-cysteine + L-glutamate + ATP = gamma-L-glutamyl-L-cysteine + ADP + phosphate + H(+). The protein operates within sulfur metabolism; glutathione biosynthesis; glutathione from L-cysteine and L-glutamate: step 1/2. The sequence is that of Glutamate--cysteine ligase, chloroplastic (GSH1) from Medicago truncatula (Barrel medic).